Reading from the N-terminus, the 203-residue chain is ATP-dependent Clp protease proteolytic subunit 2 (203 aa).

Catalysis depends on Ser101, which acts as the Nucleophile. The active site involves His126.

This sequence belongs to the peptidase S14 family. Fourteen ClpP subunits assemble into 2 heptameric rings which stack back to back to give a disk-like structure with a central cavity, resembling the structure of eukaryotic proteasomes.

The protein resides in the cytoplasm. It carries out the reaction Hydrolysis of proteins to small peptides in the presence of ATP and magnesium. alpha-casein is the usual test substrate. In the absence of ATP, only oligopeptides shorter than five residues are hydrolyzed (such as succinyl-Leu-Tyr-|-NHMec, and Leu-Tyr-Leu-|-Tyr-Trp, in which cleavage of the -Tyr-|-Leu- and -Tyr-|-Trp bonds also occurs).. Functionally, cleaves peptides in various proteins in a process that requires ATP hydrolysis. Has a chymotrypsin-like activity. Plays a major role in the degradation of misfolded proteins. The polypeptide is ATP-dependent Clp protease proteolytic subunit 2 (Prochlorococcus marinus (strain MIT 9312)).